A 497-amino-acid chain; its full sequence is Glutamate--tRNA ligase (497 aa).

Positions 13-23 (PSPTGDPHVGT) match the 'HIGH' region motif. Residues 253–257 (KISKR) carry the 'KMSKS' region motif. Lys-256 provides a ligand contact to ATP.

Belongs to the class-I aminoacyl-tRNA synthetase family. Glutamate--tRNA ligase type 1 subfamily. As to quaternary structure, monomer.

Its subcellular location is the cytoplasm. The catalysed reaction is tRNA(Glu) + L-glutamate + ATP = L-glutamyl-tRNA(Glu) + AMP + diphosphate. Its function is as follows. Catalyzes the attachment of glutamate to tRNA(Glu) in a two-step reaction: glutamate is first activated by ATP to form Glu-AMP and then transferred to the acceptor end of tRNA(Glu). The sequence is that of Glutamate--tRNA ligase from Cutibacterium acnes (strain DSM 16379 / KPA171202) (Propionibacterium acnes).